Reading from the N-terminus, the 295-residue chain is Small ribosomal subunit protein bS1 (295 aa).

S1 motif domains lie at G28–R97, G115–R179, and G193–K261.

This sequence belongs to the bacterial ribosomal protein bS1 family.

Binds mRNA. This Synechococcus elongatus (strain ATCC 33912 / PCC 7942 / FACHB-805) (Anacystis nidulans R2) protein is Small ribosomal subunit protein bS1 (rpsA).